Reading from the N-terminus, the 113-residue chain is Protein USP2 (113 aa).

The signal sequence occupies residues 1 to 18 (MKITMFFAALSAASGVFA). 6 tandem repeats follow at residues 32 to 37 (IGAGVG), 40 to 45 (IGAGVG), 46 to 49 (SYGY), 50 to 53 (PYGA), 59 to 65 (LQLLPLR), and 69 to 75 (LRRLPLR). The tract at residues 32–45 (IGAGVGIGIGAGVG) is 2 X 6 AA repeats. Positions 46–53 (SYGYPYGA) are 2 X 4 AA approximate tandem repeats. The interval 59 to 75 (LQLLPLRWLPLRRLPLR) is 2 X 7 AA approximate repeats.

Its subcellular location is the secreted. The protein is Protein USP2 (USP2) of Puccinia graminis (Black stem rust fungus).